We begin with the raw amino-acid sequence, 562 residues long: Septation ring formation regulator EzrA (562 aa).

Over 1 to 2 (ME) the chain is Extracellular. Residues 3–21 (FVIGLLIVLLALFAAGYFF) traverse the membrane as a helical segment. Topologically, residues 22-562 (RKKIYAEIDR…VEKIKADISA (541 aa)) are cytoplasmic. 2 coiled-coil regions span residues 377-425 (YSLL…LKKT) and 470-497 (MEEA…LVEQ).

Belongs to the EzrA family. Post-translationally, may be degraded by FtsH protease.

It is found in the cell membrane. It localises to the membrane raft. Negative regulator of FtsZ ring formation; modulates the frequency and position of FtsZ ring formation. Inhibits FtsZ ring formation at polar sites. Interacts either with FtsZ or with one of its binding partners to promote depolymerization. This is Septation ring formation regulator EzrA from Bacillus subtilis (strain 168).